Consider the following 219-residue polypeptide: NADH-quinone oxidoreductase subunit C (219 aa).

Belongs to the complex I 30 kDa subunit family. NDH-1 is composed of 14 different subunits. Subunits NuoB, C, D, E, F, and G constitute the peripheral sector of the complex.

Its subcellular location is the cell inner membrane. The catalysed reaction is a quinone + NADH + 5 H(+)(in) = a quinol + NAD(+) + 4 H(+)(out). NDH-1 shuttles electrons from NADH, via FMN and iron-sulfur (Fe-S) centers, to quinones in the respiratory chain. The immediate electron acceptor for the enzyme in this species is believed to be ubiquinone. Couples the redox reaction to proton translocation (for every two electrons transferred, four hydrogen ions are translocated across the cytoplasmic membrane), and thus conserves the redox energy in a proton gradient. This chain is NADH-quinone oxidoreductase subunit C, found in Methylorubrum extorquens (strain PA1) (Methylobacterium extorquens).